The following is a 548-amino-acid chain: Inosine-5'-monophosphate dehydrogenase (548 aa).

CBS domains lie at 121–201 (FILD…EDPV) and 205–261 (MSTE…PLAS). NAD(+)-binding positions include 298 to 300 (DSS) and 348 to 350 (GMG). K(+)-binding residues include Gly-350 and Gly-352. Ser-353 contacts IMP. Cys-355 provides a ligand contact to K(+). Cys-355 (thioimidate intermediate) is an active-site residue. Residues 388–390 (DGG) and 411–412 (GS) each bind IMP. Residue Arg-461 is the Proton acceptor of the active site. Gln-473 contacts IMP. A disordered region spans residues 527 to 548 (ASAQTEGNVHGLHSHEKKLYSS). Residue Ser-528 coordinates K(+). The span at 539-548 (HSHEKKLYSS) shows a compositional bias: basic and acidic residues.

The protein belongs to the IMPDH/GMPR family. Homotetramer. It depends on K(+) as a cofactor.

Its subcellular location is the cytoplasm. It carries out the reaction IMP + NAD(+) + H2O = XMP + NADH + H(+). It functions in the pathway purine metabolism; XMP biosynthesis via de novo pathway; XMP from IMP: step 1/1. Mycophenolic acid (MPA) is a non-competitive inhibitor that prevents formation of the closed enzyme conformation by binding to the same site as the amobile flap. In contrast, mizoribine monophosphate (MZP) is a competitive inhibitor that induces the closed conformation. MPA is a potent inhibitor of mammalian IMPDHs but a poor inhibitor of the bacterial enzymes. MZP is a more potent inhibitor of bacterial IMPDH. Catalyzes the conversion of inosine 5'-phosphate (IMP) to xanthosine 5'-phosphate (XMP), the first committed and rate-limiting step in the de novo synthesis of guanine nucleotides, and therefore plays an important role in the regulation of cell growth. Part of the gene cluster that mediates the biosynthesis of mycophenolic acid (MPA), the first isolated antibiotic natural product in the world. Does not play a role in the biosynthesis of MPA, but is involved in self resistance to MPA, since MPA acts as an inhibitor of IMP dehydrogenases. The sequence is that of Inosine-5'-monophosphate dehydrogenase from Penicillium brevicompactum.